The sequence spans 121 residues: Small ribosomal subunit protein uS13 (121 aa).

The tract at residues leucine 95–lysine 121 is disordered. The segment covering alanine 106 to lysine 121 has biased composition (basic residues).

The protein belongs to the universal ribosomal protein uS13 family. As to quaternary structure, part of the 30S ribosomal subunit. Forms a loose heterodimer with protein S19. Forms two bridges to the 50S subunit in the 70S ribosome.

Functionally, located at the top of the head of the 30S subunit, it contacts several helices of the 16S rRNA. In the 70S ribosome it contacts the 23S rRNA (bridge B1a) and protein L5 of the 50S subunit (bridge B1b), connecting the 2 subunits; these bridges are implicated in subunit movement. Contacts the tRNAs in the A and P-sites. This chain is Small ribosomal subunit protein uS13, found in Streptococcus thermophilus (strain CNRZ 1066).